Here is an 863-residue protein sequence, read N- to C-terminus: Paramyosin (863 aa).

A nonhelical region region spans residues 1 to 18 (MSESHVKISRTIIRGTSP). Residues 19–836 (STVRLESRVR…ERTITIKRTI (818 aa)) are a coiled coil. A nonhelical region region spans residues 837 to 863 (GGPGSRAVSVVREINSVSRGNRATSIM).

It belongs to the paramyosin family. Homodimer.

The protein resides in the cytoplasm. It localises to the myofibril. Paramyosin is a major structural component of many thick filaments isolated from invertebrate muscles. This is Paramyosin (PMY) from Taenia saginata (Beef tapeworm).